The primary structure comprises 62 residues: Large ribosomal subunit protein uL29 (62 aa).

Belongs to the universal ribosomal protein uL29 family.

The polypeptide is Large ribosomal subunit protein uL29 (Desulfosudis oleivorans (strain DSM 6200 / JCM 39069 / Hxd3) (Desulfococcus oleovorans)).